Consider the following 130-residue polypeptide: Large ribosomal subunit protein bL20 (130 aa).

The protein belongs to the bacterial ribosomal protein bL20 family.

Functionally, binds directly to 23S ribosomal RNA and is necessary for the in vitro assembly process of the 50S ribosomal subunit. It is not involved in the protein synthesizing functions of that subunit. The protein is Large ribosomal subunit protein bL20 of Salinispora arenicola (strain CNS-205).